The chain runs to 217 residues: Protein-L-isoaspartate O-methyltransferase (217 aa).

Ser-64 is a catalytic residue.

It belongs to the methyltransferase superfamily. L-isoaspartyl/D-aspartyl protein methyltransferase family.

It is found in the cytoplasm. It carries out the reaction [protein]-L-isoaspartate + S-adenosyl-L-methionine = [protein]-L-isoaspartate alpha-methyl ester + S-adenosyl-L-homocysteine. Functionally, catalyzes the methyl esterification of L-isoaspartyl residues in peptides and proteins that result from spontaneous decomposition of normal L-aspartyl and L-asparaginyl residues. It plays a role in the repair and/or degradation of damaged proteins. The protein is Protein-L-isoaspartate O-methyltransferase of Azorhizobium caulinodans (strain ATCC 43989 / DSM 5975 / JCM 20966 / LMG 6465 / NBRC 14845 / NCIMB 13405 / ORS 571).